Here is a 571-residue protein sequence, read N- to C-terminus: Methionine--tRNA ligase (571 aa).

Positions 10–20 (PYVNAVPHLGN) match the 'HIGH' region motif. Zn(2+) contacts are provided by cysteine 143, cysteine 146, cysteine 156, and cysteine 159. Positions 333-337 (KFSKS) match the 'KMSKS' region motif. Residue lysine 336 coordinates ATP.

This sequence belongs to the class-I aminoacyl-tRNA synthetase family. MetG type 1 subfamily. It depends on Zn(2+) as a cofactor.

The protein resides in the cytoplasm. The catalysed reaction is tRNA(Met) + L-methionine + ATP = L-methionyl-tRNA(Met) + AMP + diphosphate. Is required not only for elongation of protein synthesis but also for the initiation of all mRNA translation through initiator tRNA(fMet) aminoacylation. In Sulfurisphaera tokodaii (strain DSM 16993 / JCM 10545 / NBRC 100140 / 7) (Sulfolobus tokodaii), this protein is Methionine--tRNA ligase.